An 84-amino-acid chain; its full sequence is Small ribosomal subunit protein uS17 (84 aa).

This sequence belongs to the universal ribosomal protein uS17 family. Part of the 30S ribosomal subunit.

Its function is as follows. One of the primary rRNA binding proteins, it binds specifically to the 5'-end of 16S ribosomal RNA. This chain is Small ribosomal subunit protein uS17, found in Serratia proteamaculans (strain 568).